The chain runs to 61 residues: Small ribosomal subunit protein uS14 (61 aa).

The Zn(2+) site is built by Cys24, Cys27, Cys40, and Cys43.

The protein belongs to the universal ribosomal protein uS14 family. Zinc-binding uS14 subfamily. Part of the 30S ribosomal subunit. Contacts proteins S3 and S10. It depends on Zn(2+) as a cofactor.

Binds 16S rRNA, required for the assembly of 30S particles and may also be responsible for determining the conformation of the 16S rRNA at the A site. This is Small ribosomal subunit protein uS14 from Leptospira biflexa serovar Patoc (strain Patoc 1 / Ames).